A 1157-amino-acid chain; its full sequence is DNA-directed RNA polymerase subunit beta (1157 aa).

Belongs to the RNA polymerase beta chain family. In terms of assembly, the RNAP catalytic core consists of 2 alpha, 1 beta, 1 beta' and 1 omega subunit. When a sigma factor is associated with the core the holoenzyme is formed, which can initiate transcription.

The catalysed reaction is RNA(n) + a ribonucleoside 5'-triphosphate = RNA(n+1) + diphosphate. Its function is as follows. DNA-dependent RNA polymerase catalyzes the transcription of DNA into RNA using the four ribonucleoside triphosphates as substrates. The protein is DNA-directed RNA polymerase subunit beta of Tropheryma whipplei (Whipple's bacillus).